We begin with the raw amino-acid sequence, 229 residues long: Heptaprenylglyceryl phosphate synthase (229 aa).

A sn-glycerol 1-phosphate-binding site is contributed by K12. Mg(2+)-binding residues include D14 and S40. Sn-glycerol 1-phosphate contacts are provided by residues 159-164 (YLEYSG), G189, and 209-210 (GN).

Belongs to the GGGP/HepGP synthase family. Group I subfamily. Homodimer. Mg(2+) serves as cofactor.

The catalysed reaction is sn-glycerol 1-phosphate + all-trans-heptaprenyl diphosphate = 3-heptaprenyl-sn-glycero-1-phosphate + diphosphate. Its pathway is membrane lipid metabolism; glycerophospholipid metabolism. Its function is as follows. Prenyltransferase that catalyzes in vivo the transfer of the heptaprenyl moiety of heptaprenyl pyrophosphate (HepPP; 35 carbon atoms) to the C3 hydroxyl of sn-glycerol-1-phosphate (G1P), producing heptaprenylglyceryl phosphate (HepGP). This reaction is an ether-bond-formation step in the biosynthesis of archaea-type G1P-based membrane lipids found in Bacillales. The protein is Heptaprenylglyceryl phosphate synthase of Bacillus cytotoxicus (strain DSM 22905 / CIP 110041 / 391-98 / NVH 391-98).